The sequence spans 162 residues: NADPH-dependent 7-cyano-7-deazaguanine reductase (162 aa).

Residue cysteine 53 is the Thioimide intermediate of the active site. Aspartate 60 (proton donor) is an active-site residue. Substrate contacts are provided by residues 75-77 (VES) and 94-95 (HE).

The protein belongs to the GTP cyclohydrolase I family. QueF type 1 subfamily.

The protein resides in the cytoplasm. It catalyses the reaction 7-aminomethyl-7-carbaguanine + 2 NADP(+) = 7-cyano-7-deazaguanine + 2 NADPH + 3 H(+). The protein operates within tRNA modification; tRNA-queuosine biosynthesis. In terms of biological role, catalyzes the NADPH-dependent reduction of 7-cyano-7-deazaguanine (preQ0) to 7-aminomethyl-7-deazaguanine (preQ1). In Exiguobacterium sibiricum (strain DSM 17290 / CCUG 55495 / CIP 109462 / JCM 13490 / 255-15), this protein is NADPH-dependent 7-cyano-7-deazaguanine reductase.